The sequence spans 156 residues: Small ribosomal subunit protein uS7 (156 aa).

This sequence belongs to the universal ribosomal protein uS7 family. As to quaternary structure, part of the 30S ribosomal subunit. Contacts proteins S9 and S11.

One of the primary rRNA binding proteins, it binds directly to 16S rRNA where it nucleates assembly of the head domain of the 30S subunit. Is located at the subunit interface close to the decoding center, probably blocks exit of the E-site tRNA. The sequence is that of Small ribosomal subunit protein uS7 from Streptococcus uberis (strain ATCC BAA-854 / 0140J).